The following is a 341-amino-acid chain: MDTVRIAVVGAGVIGLSTAACVSQLVPRCSVTVISDRFTPDTTSNVAAGMLIPPTYPDTPVPTLKRWFRETFQHLSEIARSAEAVDAGIHLVSGWQIFRSVPTEEVPFWADVVLGFREMTEAELKRFPQYEFGQAFTTLKCETSAYLPWLEKRIKGSGGLLLTRRIEDLWELQPSFDIVVNCSGLGSRRLVGDATVSPVRGQVLQAQAPWVKHFIRDGGGLTYVYPGTSYVTLGGSRQTGDWNLSPDAELSREIFSRCCALEPSLHRACDIKEKVGLRPSRPGVRLQKEILVRGEQRLPVVHNYGHGSGGISVHWGSALEATRLVMECVHTLRTPASLSKL.

FAD-binding residues include Asp36, Arg37, Thr43, Ser44, Met50, Gly307, Ile311, and Ser312. A Microbody targeting signal motif is present at residues Ser339–Leu341.

The protein belongs to the DAMOX/DASOX family. As to quaternary structure, tetramer. Interacts with PEX5; the interaction is direct and required for localization of DDO to the peroxisome. FAD is required as a cofactor. As to expression, expressed in liver and kidney (at protein level). In the brain, expressed in the frontal, temporal, and occipital lobes of the cortex, hippocampus, striatum, diencephalon, brainstem, cerebellum, spinal cord, plexus choroiderus and ependyma (at protein level). Also expressed in the lung, muscle, heart, spleen, small intestine and testis (at protein level).

The protein resides in the peroxisome matrix. It localises to the cytoplasm. Its subcellular location is the cytosol. The catalysed reaction is D-aspartate + O2 + H2O = oxaloacetate + H2O2 + NH4(+). It catalyses the reaction D-glutamate + O2 + H2O = H2O2 + 2-oxoglutarate + NH4(+). Its activity is regulated as follows. Inhibited by aminooxyacetic acid, malonate, meso-tartrate and potassium bromide. Its function is as follows. Selectively catalyzes the oxidative deamination of acidic amino acids. Suppresses the level of D-aspartate in the brain, an amino acid that can act as an agonist for glutamate receptors. Protects the organism from the toxicity of D-amino acids. May also function in the intestine. This Rattus norvegicus (Rat) protein is D-aspartate oxidase.